Here is a 92-residue protein sequence, read N- to C-terminus: Small ribosomal subunit protein uS19 (92 aa).

The protein belongs to the universal ribosomal protein uS19 family.

Protein S19 forms a complex with S13 that binds strongly to the 16S ribosomal RNA. This is Small ribosomal subunit protein uS19 from Wigglesworthia glossinidia brevipalpis.